We begin with the raw amino-acid sequence, 822 residues long: A disintegrin and metallopeptidase domain 3 (822 aa).

The N-terminal stretch at 1-16 is a signal peptide; it reads MLPLFLVLSYLGQVIA. The Peptidase M12B domain occupies 187–384; that stretch reads RILRIKIIMD…PELDCLRNTS (198 aa). Cystine bridges form between cysteine 296-cysteine 379, cysteine 338-cysteine 363, cysteine 340-cysteine 345, cysteine 456-cysteine 476, cysteine 623-cysteine 635, cysteine 629-cysteine 641, and cysteine 643-cysteine 652. Positions 395–484 constitute a Disintegrin domain; that stretch reads GSYCGNHLLE…GCAPDTKAAD (90 aa). The 35-residue stretch at 619 to 653 folds into the EGF-like domain; it reads GTRECEADDKCQGHGICNNLNNCQCESGFAPPECD. The chain crosses the membrane as a helical span at residues 689–709; it reads VLLISFYILLPFLVVLAFMAV.

Interacts with LY6K. Interacts with TEX101. Initially synthesized as a 110-kDa precursor in round spermatids, and the precursor is then processed into a 42-kDa mature protein during the sperm transport into and/or once in the epididymis. Expressed in sperm (at protein level).

The protein resides in the cell membrane. Functionally, involved in fertilization by controlling sperm migration into the oviduct. Promotes the binding of sperm to the oocyte zona pellucida. This chain is A disintegrin and metallopeptidase domain 3, found in Mus musculus (Mouse).